The sequence spans 211 residues: UPF0637 protein ABC2405 (211 aa).

The protein belongs to the UPF0637 family.

The protein is UPF0637 protein ABC2405 of Shouchella clausii (strain KSM-K16) (Alkalihalobacillus clausii).